Here is a 210-residue protein sequence, read N- to C-terminus: Protein MSO1 (210 aa).

At Met-1 the chain carries N-acetylmethionine. Met-2 is subject to N-acetylserine. A disordered region spans residues 88 to 210 (KHDMKKQNSR…LKRRNNDYGF (123 aa)). Ser-102 bears the Phosphoserine mark. Over residues 117–141 (TPSSNGNTPEYTPASKSFQDIYNNH) the composition is skewed to polar residues. Low complexity-rich tracts occupy residues 142–161 (TSSS…RPSA) and 172–183 (SKTSNSFNTSST).

As to quaternary structure, interacts physically with SEC1.

In terms of biological role, involved in secretion. Component of the secretory vesicle docking complex. In Saccharomyces cerevisiae (strain ATCC 204508 / S288c) (Baker's yeast), this protein is Protein MSO1 (MSO1).